Here is a 130-residue protein sequence, read N- to C-terminus: Small ribosomal subunit protein uS11c (130 aa).

It belongs to the universal ribosomal protein uS11 family. As to quaternary structure, part of the 30S ribosomal subunit.

The protein localises to the plastid. Its subcellular location is the chloroplast. In Drimys granadensis, this protein is Small ribosomal subunit protein uS11c.